A 266-amino-acid polypeptide reads, in one-letter code: Probable metal transport system membrane protein TP_0036 (266 aa).

Helical transmembrane passes span 10–30, 34–54, 56–76, 88–108, 120–140, 172–192, 211–231, and 238–258; these read AFVA…HLVL, ALMG…AVSC, IHPG…IEFL, LSIV…SGLI, ILVV…FCVG, VASV…GILV, FLLT…LGLV, and VAPG…VIAL.

It belongs to the ABC-3 integral membrane protein family.

It is found in the cell inner membrane. Functionally, part of an ATP-driven transport system TP_0034/TP_0035/TP_0036 for a metal. The sequence is that of Probable metal transport system membrane protein TP_0036 from Treponema pallidum (strain Nichols).